The chain runs to 607 residues: Glutamine--fructose-6-phosphate aminotransferase [isomerizing] (607 aa).

Cys-2 functions as the Nucleophile; for GATase activity in the catalytic mechanism. The Glutamine amidotransferase type-2 domain occupies 2 to 217 (CGIIGIIGRE…EGDWVVLTRE (216 aa)). 2 consecutive SIS domains span residues 283–422 (PDFD…VKGQ) and 455–597 (VATA…VDQP). Residue Lys-602 is the For Fru-6P isomerization activity of the active site.

In terms of assembly, homodimer.

The protein localises to the cytoplasm. It catalyses the reaction D-fructose 6-phosphate + L-glutamine = D-glucosamine 6-phosphate + L-glutamate. Catalyzes the first step in hexosamine metabolism, converting fructose-6P into glucosamine-6P using glutamine as a nitrogen source. This chain is Glutamine--fructose-6-phosphate aminotransferase [isomerizing], found in Zymomonas mobilis subsp. mobilis (strain ATCC 31821 / ZM4 / CP4).